The chain runs to 373 residues: Dual-specificity RNA methyltransferase RlmN (373 aa).

E94 acts as the Proton acceptor in catalysis. A Radical SAM core domain is found at 100–339 (EDDRATLCVS…VIVRKTRGDD (240 aa)). C107 and C344 are joined by a disulfide. [4Fe-4S] cluster contacts are provided by C114, C118, and C121. S-adenosyl-L-methionine contacts are provided by residues 168–169 (GE), S200, 222–224 (SIH), and N301. Catalysis depends on C344, which acts as the S-methylcysteine intermediate.

This sequence belongs to the radical SAM superfamily. RlmN family. It depends on [4Fe-4S] cluster as a cofactor.

Its subcellular location is the cytoplasm. The catalysed reaction is adenosine(2503) in 23S rRNA + 2 reduced [2Fe-2S]-[ferredoxin] + 2 S-adenosyl-L-methionine = 2-methyladenosine(2503) in 23S rRNA + 5'-deoxyadenosine + L-methionine + 2 oxidized [2Fe-2S]-[ferredoxin] + S-adenosyl-L-homocysteine. It catalyses the reaction adenosine(37) in tRNA + 2 reduced [2Fe-2S]-[ferredoxin] + 2 S-adenosyl-L-methionine = 2-methyladenosine(37) in tRNA + 5'-deoxyadenosine + L-methionine + 2 oxidized [2Fe-2S]-[ferredoxin] + S-adenosyl-L-homocysteine. Its function is as follows. Specifically methylates position 2 of adenine 2503 in 23S rRNA and position 2 of adenine 37 in tRNAs. m2A2503 modification seems to play a crucial role in the proofreading step occurring at the peptidyl transferase center and thus would serve to optimize ribosomal fidelity. This Shewanella amazonensis (strain ATCC BAA-1098 / SB2B) protein is Dual-specificity RNA methyltransferase RlmN.